The chain runs to 105 residues: UPF0148 protein PH0795 (105 aa).

The protein belongs to the UPF0148 family.

The chain is UPF0148 protein PH0795 from Pyrococcus horikoshii (strain ATCC 700860 / DSM 12428 / JCM 9974 / NBRC 100139 / OT-3).